The following is a 104-amino-acid chain: T-complex protein 1 subunit zeta (104 aa).

Position 24 (G24) interacts with ADP. ATP is bound at residue G24. Residue D75 participates in Mg(2+) binding. ADP-binding residues include G76, T78, and S79. G76 and T78 together coordinate ATP.

The protein belongs to the TCP-1 chaperonin family. Component of the chaperonin-containing T-complex (TRiC), a hexadecamer composed of two identical back-to-back stacked rings enclosing a protein folding chamber. Each ring is made up of eight different subunits: TCP1/CCT1, CCT2, CCT3, CCT4, CCT5, CCT6A/CCT6, CCT7, CCT8. Interacts with PACRG.

The protein localises to the cytoplasm. It catalyses the reaction ATP + H2O = ADP + phosphate + H(+). Functionally, component of the chaperonin-containing T-complex (TRiC), a molecular chaperone complex that assists the folding of actin, tubulin and other proteins upon ATP hydrolysis. The TRiC complex mediates the folding of WRAP53/TCAB1, thereby regulating telomere maintenance. In Sus scrofa (Pig), this protein is T-complex protein 1 subunit zeta (CCT6).